We begin with the raw amino-acid sequence, 299 residues long: MQRVINFSKYGSNVLIVSAVLILVGLIYTFFYHGGYNWGIDFSSRVNINLSIEKSNIKENEIKKIFSPIYKTLDVNSIFSPDQNKSEFSIMVKSDVIDYAFKTEVQKTILDKLKETFDANIEVLDSYFIDSSFSSTLRIRSIFLVLGTFILILIYITLRFKLSYAIASILSIFHDIFFIVAFLGVFRIEINSYIIVAILTIIGYSLNDTIIIFDRIRDNVKRLTDNTFLNVLNISISQTLSRTVLTSVTTFVAVFSIYVFTEGSIKDFSLVFMVGVIVGTYSSVFIASPILLNLYKKIK.

Transmembrane regions (helical) follow at residues 14 to 34 (VLIV…FYHG), 142 to 162 (IFLV…RFKL), 166 to 186 (IASI…LGVF), 193 to 213 (YIIV…IIIF), 245 to 265 (LTSV…EGSI), and 270 to 290 (LVFM…ASPI).

This sequence belongs to the SecD/SecF family. SecF subfamily. As to quaternary structure, forms a complex with SecD. Part of the essential Sec protein translocation apparatus which comprises SecA, SecYEG and auxiliary proteins SecDF. Other proteins may also be involved.

It is found in the cell inner membrane. Part of the Sec protein translocase complex. Interacts with the SecYEG preprotein conducting channel. SecDF uses the proton motive force (PMF) to complete protein translocation after the ATP-dependent function of SecA. The polypeptide is Protein translocase subunit SecF (Borreliella burgdorferi (strain ATCC 35210 / DSM 4680 / CIP 102532 / B31) (Borrelia burgdorferi)).